A 336-amino-acid polypeptide reads, in one-letter code: Cell division protein ZipA (336 aa).

Residues 1–2 are Periplasmic-facing; it reads ME. Residues 3-23 form a helical membrane-spanning segment; that stretch reads LHILFFILAGLLIAVLISFSL. Residues 24–336 lie on the Cytoplasmic side of the membrane; sequence WSARREKSRI…SRQSYLARVS (313 aa). Residues 56–77 are disordered; the sequence is PSLNPQSYAQTTGQHGETEADN. Over residues 59–70 the composition is skewed to polar residues; sequence NPQSYAQTTGQH.

The protein belongs to the ZipA family. Interacts with FtsZ via their C-terminal domains.

It is found in the cell inner membrane. In terms of biological role, essential cell division protein that stabilizes the FtsZ protofilaments by cross-linking them and that serves as a cytoplasmic membrane anchor for the Z ring. Also required for the recruitment to the septal ring of downstream cell division proteins. In Actinobacillus pleuropneumoniae serotype 3 (strain JL03), this protein is Cell division protein ZipA.